The primary structure comprises 473 residues: tRNA-2-methylthio-N(6)-dimethylallyladenosine synthase (473 aa).

The MTTase N-terminal domain occupies 5 to 125 (RKLHIKSYGC…LPQLLARADQ (121 aa)). Residues Cys14, Cys50, Cys88, Cys166, Cys170, and Cys173 each contribute to the [4Fe-4S] cluster site. The 233-residue stretch at 152-384 (RARGISAFVT…QQLIDSQQSA (233 aa)) folds into the Radical SAM core domain. Residues 387 to 459 (KAAIGQTVDV…RYSLLGELAA (73 aa)) form the TRAM domain.

It belongs to the methylthiotransferase family. MiaB subfamily. Monomer. Requires [4Fe-4S] cluster as cofactor.

The protein localises to the cytoplasm. The catalysed reaction is N(6)-dimethylallyladenosine(37) in tRNA + (sulfur carrier)-SH + AH2 + 2 S-adenosyl-L-methionine = 2-methylsulfanyl-N(6)-dimethylallyladenosine(37) in tRNA + (sulfur carrier)-H + 5'-deoxyadenosine + L-methionine + A + S-adenosyl-L-homocysteine + 2 H(+). Functionally, catalyzes the methylthiolation of N6-(dimethylallyl)adenosine (i(6)A), leading to the formation of 2-methylthio-N6-(dimethylallyl)adenosine (ms(2)i(6)A) at position 37 in tRNAs that read codons beginning with uridine. The sequence is that of tRNA-2-methylthio-N(6)-dimethylallyladenosine synthase from Rhodopseudomonas palustris (strain BisB5).